A 402-amino-acid polypeptide reads, in one-letter code: Multidrug resistance protein MdtH (402 aa).

Topologically, residues 1–12 (MSRVSQARNLGK) are cytoplasmic. The chain crosses the membrane as a helical span at residues 13–33 (YFLLIDNMLVVLGFFVVFPLI). Residues 34–98 (SIRFVDQMGW…GFATMGIAHE (65 aa)) lie on the Periplasmic side of the membrane. Residues 99 to 116 (PWLLWFSCLLSGLGGTLF) traverse the membrane as a helical segment. The Cytoplasmic portion of the chain corresponds to 117-138 (DPPRSALVVKLIRPQQRGRFFS). The helical transmembrane segment at 139–159 (LLMMQDSAGAVIGALLGSWLL) threads the bilayer. Topologically, residues 160–164 (QYDFR) are periplasmic. The helical transmembrane segment at 165 to 185 (LVCATGAVLFVLCAAFNAWLL) threads the bilayer. The Cytoplasmic segment spans residues 186–213 (PAWKLSTVRTPVREGMTRVMRDKRFVTY). The helical transmembrane segment at 214–234 (VLTLAGYYMLAVQVMLMLPIM) threads the bilayer. At 235–243 (VNDVAGAPS) the chain is on the periplasmic side. Residues 244–264 (AVKWMYAIEACLSLTLLYPIA) traverse the membrane as a helical segment. Residues 265–276 (RWSEKHFRLEHR) lie on the Cytoplasmic side of the membrane. Residues 277–297 (LMAGLLIMSLSMMPVGMVSGL) traverse the membrane as a helical segment. Topologically, residues 298–299 (QQ) are periplasmic. A helical membrane pass occupies residues 300 to 320 (LFTLICLFYIGSIIAEPARET). Residues 321–339 (LSASLADARARGSYMGCSR) are Cytoplasmic-facing. The chain crosses the membrane as a helical span at residues 340–360 (LGLAIGGAIGYIGGGWLFDLG). Over 361-367 (KSAHQPE) the chain is Periplasmic. Residues 368–388 (LPWMMLGIIGIFTFLALGWQF) form a helical membrane-spanning segment. The Cytoplasmic segment spans residues 389–402 (SQKRAARRLLERDA).

The protein belongs to the major facilitator superfamily. DHA1 family. MdtH (TC 2.A.1.2.21) subfamily.

It is found in the cell inner membrane. Its function is as follows. Confers resistance to norfloxacin and enoxacin. This is Multidrug resistance protein MdtH from Escherichia coli (strain SE11).